We begin with the raw amino-acid sequence, 524 residues long: MPSKNPADTVSIYVPGASINSQTASDSTQPAASAYHHKANHNQNRSIEQSAQQAAEQSLHTAETVAPKVGFVSLGCPKALVDSERIITELTRDGYRVASDYNGADLVVVNTCGFIESAVQESLDAIGEALNKNGKVIVTGCLGKDAQKIRDMHPAVLAVTGAHAYDEVITAVSTHAPMPQAIQDKKAYDPKIDLIDLAGVKLTPSHYAYLKISEGCNHRCTFCIIPSLRGDLLSRPIEQVMGEAMALKKAGVKEILVISQDTSAYGVDLKYKTSFWDGMPLKSKFFDMCQALAKVGIWVRLHYVYPYPHVDKVVELMAKPGDRGGLLPYLDIPLQHASPSVLKAMKRPAHSENTLARIQKWREINPDIVIRSTFVVGFPGETEEDFEYLLEWLKQAKLDRVGCFTYSEIEGAVANDLPNPVPEAIKQERYERFMAVQQQISEQKLQEKVGKTMTVLVDEIDTEEQIAICRSYADAPEIDGHVYVDNIVQNGMMMVKVGDMLTVTIDEASEYDLFASYDAVQALA.

The span at 20 to 31 (NSQTASDSTQPA) shows a compositional bias: polar residues. The interval 20–59 (NSQTASDSTQPAASAYHHKANHNQNRSIEQSAQQAAEQSL) is disordered. A compositionally biased stretch (low complexity) spans 48 to 58 (EQSAQQAAEQS). The 111-residue stretch at 67–177 (PKVGFVSLGC…VITAVSTHAP (111 aa)) folds into the MTTase N-terminal domain. Cysteine 76, cysteine 112, cysteine 141, cysteine 216, cysteine 220, and cysteine 223 together coordinate [4Fe-4S] cluster. One can recognise a Radical SAM core domain in the interval 202 to 443 (LTPSHYAYLK…MAVQQQISEQ (242 aa)). The TRAM domain occupies 446–519 (QEKVGKTMTV…EYDLFASYDA (74 aa)).

Belongs to the methylthiotransferase family. RimO subfamily. [4Fe-4S] cluster is required as a cofactor.

Its subcellular location is the cytoplasm. The catalysed reaction is L-aspartate(89)-[ribosomal protein uS12]-hydrogen + (sulfur carrier)-SH + AH2 + 2 S-adenosyl-L-methionine = 3-methylsulfanyl-L-aspartate(89)-[ribosomal protein uS12]-hydrogen + (sulfur carrier)-H + 5'-deoxyadenosine + L-methionine + A + S-adenosyl-L-homocysteine + 2 H(+). In terms of biological role, catalyzes the methylthiolation of an aspartic acid residue of ribosomal protein uS12. In Psychrobacter sp. (strain PRwf-1), this protein is Ribosomal protein uS12 methylthiotransferase RimO.